Reading from the N-terminus, the 146-residue chain is Monothiol glutaredoxin-5, mitochondrial (146 aa).

The Glutaredoxin domain maps to 26–131 (RQALEQAVKE…KILKEINALA (106 aa)). Position 43 (Lys43) interacts with glutathione. A [2Fe-2S] cluster-binding site is contributed by Cys51. Glutathione is bound by residues 83–87 (REGIK), Ile95, and 108–109 (SD).

This sequence belongs to the glutaredoxin family. Monothiol subfamily. In terms of assembly, homodimer. Interacts with ISA1 and ISA2.

The protein localises to the mitochondrion. Its function is as follows. Monothiol glutaredoxin involved in mitochondrial iron-sulfur (Fe/S) cluster transfer. Receives 2Fe/2S clusters from scaffold protein isu1 and mediates their transfer to apoproteins, to the 4Fe/FS cluster biosynthesis machinery, or export from mitochondrion. This Schizosaccharomyces pombe (strain 972 / ATCC 24843) (Fission yeast) protein is Monothiol glutaredoxin-5, mitochondrial.